The following is a 537-amino-acid chain: CTP synthase (537 aa).

Residues methionine 1–leucine 265 are amidoligase domain. CTP is bound at residue serine 13. Residue serine 13 coordinates UTP. Glycine 14–isoleucine 19 is an ATP binding site. Tyrosine 54 lines the L-glutamine pocket. ATP is bound at residue aspartate 71. Aspartate 71 and glutamate 139 together coordinate Mg(2+). Residues aspartate 146–glutamate 148, lysine 186–glutamine 191, and lysine 222 contribute to the CTP site. UTP contacts are provided by residues lysine 186–glutamine 191 and lysine 222. A Glutamine amidotransferase type-1 domain is found at glutamate 290 to glutamate 532. Residue glycine 351 participates in L-glutamine binding. Cysteine 378 acts as the Nucleophile; for glutamine hydrolysis in catalysis. Residues phenylalanine 379–glutamine 382, glutamate 402, and arginine 459 contribute to the L-glutamine site. Active-site residues include histidine 505 and glutamate 507.

Belongs to the CTP synthase family. Homotetramer.

The enzyme catalyses UTP + L-glutamine + ATP + H2O = CTP + L-glutamate + ADP + phosphate + 2 H(+). It carries out the reaction L-glutamine + H2O = L-glutamate + NH4(+). The catalysed reaction is UTP + NH4(+) + ATP = CTP + ADP + phosphate + 2 H(+). It participates in pyrimidine metabolism; CTP biosynthesis via de novo pathway; CTP from UDP: step 2/2. Its activity is regulated as follows. Allosterically activated by GTP, when glutamine is the substrate; GTP has no effect on the reaction when ammonia is the substrate. The allosteric effector GTP functions by stabilizing the protein conformation that binds the tetrahedral intermediate(s) formed during glutamine hydrolysis. Inhibited by the product CTP, via allosteric rather than competitive inhibition. Functionally, catalyzes the ATP-dependent amination of UTP to CTP with either L-glutamine or ammonia as the source of nitrogen. Regulates intracellular CTP levels through interactions with the four ribonucleotide triphosphates. The protein is CTP synthase of Pyrococcus abyssi (strain GE5 / Orsay).